Consider the following 286-residue polypeptide: Aquaporin PIP1-1 (286 aa).

M1 carries the N-acetylmethionine modification. Positions 1–34 (MEGKEEDVRVGANKFPERQPIGTSAQSDKDYKEP) are disordered. At 1 to 54 (MEGKEEDVRVGANKFPERQPIGTSAQSDKDYKEPPPAPFFEPGELSSWSFWRAG) the chain is on the cytoplasmic side. The helical transmembrane segment at 55–75 (IAEFIATFLFLYITVLTVMGV) threads the bilayer. Residues 76–91 (KRSPNMCASVGIQGIA) lie on the Extracellular side of the membrane. A helical transmembrane segment spans residues 92-112 (WAFGGMIFALVYCTAGISGGH). Residues 113–132 (INPAVTFGLFLARKLSLTRA) lie on the Cytoplasmic side of the membrane. Positions 114-116 (NPA) match the NPA 1 motif. Residues 133 to 153 (LYYIVMQCLGAICGAGVVKGF) form a helical membrane-spanning segment. Over 154 to 174 (QPKQYQALGGGANTVAHGYTK) the chain is Extracellular. The chain crosses the membrane as a helical span at residues 175 to 195 (GSGLGAEIIGTFVLVYTVFSA). The Cytoplasmic segment spans residues 196-208 (TDAKRNARDSHVP). Residues 209–229 (ILAPLPIGFAVFLVHLATIPI) traverse the membrane as a helical segment. At 230 to 256 (TGTGINPARSLGAAIIYNKDHSWDDHW) the chain is on the extracellular side. The NPA 2 motif lies at 235-237 (NPA). Residues 257–277 (VFWVGPFIGAALAALYHVVVI) traverse the membrane as a helical segment. Topologically, residues 278–286 (RAIPFKSRS) are cytoplasmic. At S284 the chain carries Phosphoserine.

It belongs to the MIP/aquaporin (TC 1.A.8) family. PIP (TC 1.A.8.11) subfamily. Widely expressed. Expressed in roots, above ground and in flower buds.

Its subcellular location is the cell membrane. Its function is as follows. Water channel required to facilitate the transport of water across cell membrane. Its function is impaired by Hg(2+). The protein is Aquaporin PIP1-1 (PIP1-1) of Arabidopsis thaliana (Mouse-ear cress).